Consider the following 172-residue polypeptide: Ribosome maturation factor RimM (172 aa).

The 73-residue stretch at 96–168 folds into the PRC barrel domain; the sequence is DGEFYYHEII…RIDVTVLEGL (73 aa).

The protein belongs to the RimM family. Binds ribosomal protein uS19.

It localises to the cytoplasm. An accessory protein needed during the final step in the assembly of 30S ribosomal subunit, possibly for assembly of the head region. Essential for efficient processing of 16S rRNA. May be needed both before and after RbfA during the maturation of 16S rRNA. It has affinity for free ribosomal 30S subunits but not for 70S ribosomes. This Streptococcus mutans serotype c (strain ATCC 700610 / UA159) protein is Ribosome maturation factor RimM.